The sequence spans 127 residues: Small ribosomal subunit protein uS13 (127 aa).

Positions 93 to 127 (RQGLPVRGQRTRTNGRTRRGRRVTVAGKKKAPAKK) are disordered. Residues 101–127 (QRTRTNGRTRRGRRVTVAGKKKAPAKK) are compositionally biased toward basic residues.

Belongs to the universal ribosomal protein uS13 family. Part of the 30S ribosomal subunit. Forms a loose heterodimer with protein S19. Forms two bridges to the 50S subunit in the 70S ribosome.

Located at the top of the head of the 30S subunit, it contacts several helices of the 16S rRNA. In the 70S ribosome it contacts the 23S rRNA (bridge B1a) and protein L5 of the 50S subunit (bridge B1b), connecting the 2 subunits; these bridges are implicated in subunit movement. Contacts the tRNAs in the A and P-sites. This is Small ribosomal subunit protein uS13 from Crocosphaera subtropica (strain ATCC 51142 / BH68) (Cyanothece sp. (strain ATCC 51142)).